Here is a 345-residue protein sequence, read N- to C-terminus: 3-isopropylmalate dehydrogenase (345 aa).

Substrate contacts are provided by Arg-94, Arg-104, Arg-132, and Asp-216. The Mg(2+) site is built by Asp-216, Asp-240, and Asp-244. 274-286 (GSAPDIAGQGIAN) provides a ligand contact to NAD(+).

Belongs to the isocitrate and isopropylmalate dehydrogenases family. LeuB type 1 subfamily. As to quaternary structure, homodimer. The cofactor is Mg(2+). It depends on Mn(2+) as a cofactor.

The protein resides in the cytoplasm. It catalyses the reaction (2R,3S)-3-isopropylmalate + NAD(+) = 4-methyl-2-oxopentanoate + CO2 + NADH. The protein operates within amino-acid biosynthesis; L-leucine biosynthesis; L-leucine from 3-methyl-2-oxobutanoate: step 3/4. Functionally, catalyzes the oxidation of 3-carboxy-2-hydroxy-4-methylpentanoate (3-isopropylmalate) to 3-carboxy-4-methyl-2-oxopentanoate. The product decarboxylates to 4-methyl-2 oxopentanoate. The sequence is that of 3-isopropylmalate dehydrogenase from Streptococcus pneumoniae (strain ATCC BAA-255 / R6).